A 238-amino-acid polypeptide reads, in one-letter code: 15,16-dihydrobiliverdin:ferredoxin oxidoreductase (238 aa).

The protein belongs to the HY2 family.

The enzyme catalyses 15,16-dihydrobiliverdin + oxidized 2[4Fe-4S]-[ferredoxin] = biliverdin IXalpha + reduced 2[4Fe-4S]-[ferredoxin] + 2 H(+). Functionally, catalyzes the two-electron reduction of biliverdin IX-alpha at the C15 methine bridge. The polypeptide is 15,16-dihydrobiliverdin:ferredoxin oxidoreductase (Prochlorococcus marinus (strain MIT 9211)).